Reading from the N-terminus, the 268-residue chain is MISDAIRAVILGIIEGVTEFLPVSSTGHLLLAERFFDLGSGNFWDTFTVLIQPGAILAIVVIYFAKLWRVALGMFSNPADRRFVIGVLAAFLPAVIVGLIAGKYIKELLFNPWVVCFSLIVGGAVLMWVDQLDHRPREHDATAFPLPMYVWIGIAQCVAMIPGVSRSGATIVSAMLLGADKRAAAEFSFFLAIPTMTGAFAYDFYKNHADMTTDDLGTVAIGFVVSFVTAIIVVKAFLSYVTRNGFTFFAWWRVIVGTLGLIALALGR.

The next 7 membrane-spanning stretches (helical) occupy residues 47-67 (FTVL…FAKL), 83-103 (FVIG…IAGK), 109-129 (LFNP…LMWV), 144-164 (FPLP…IPGV), 184-204 (AAEF…AYDF), 218-238 (TVAI…KAFL), and 246-266 (FTFF…ALAL).

It belongs to the UppP family.

The protein resides in the cell inner membrane. It carries out the reaction di-trans,octa-cis-undecaprenyl diphosphate + H2O = di-trans,octa-cis-undecaprenyl phosphate + phosphate + H(+). In terms of biological role, catalyzes the dephosphorylation of undecaprenyl diphosphate (UPP). Confers resistance to bacitracin. This chain is Undecaprenyl-diphosphatase, found in Nitrobacter winogradskyi (strain ATCC 25391 / DSM 10237 / CIP 104748 / NCIMB 11846 / Nb-255).